The primary structure comprises 440 residues: tRNA modification GTPase MnmE (440 aa).

(6S)-5-formyl-5,6,7,8-tetrahydrofolate is bound by residues Arg-34, Glu-94, and Arg-134. The 139-residue stretch at Gly-229–Ala-367 folds into the TrmE-type G domain. Asn-239 serves as a coordination point for K(+). Residues Asn-239–Thr-244, Thr-258–Thr-264, Asp-283–Gly-286, and Ser-348–Arg-350 contribute to the GTP site. Ser-243 is a Mg(2+) binding site. K(+) contacts are provided by Thr-258, Ile-260, and Thr-263. Thr-264 contributes to the Mg(2+) binding site. (6S)-5-formyl-5,6,7,8-tetrahydrofolate is bound at residue Lys-440.

Belongs to the TRAFAC class TrmE-Era-EngA-EngB-Septin-like GTPase superfamily. TrmE GTPase family. In terms of assembly, homodimer. Heterotetramer of two MnmE and two MnmG subunits. K(+) serves as cofactor.

Its subcellular location is the cytoplasm. Exhibits a very high intrinsic GTPase hydrolysis rate. Involved in the addition of a carboxymethylaminomethyl (cmnm) group at the wobble position (U34) of certain tRNAs, forming tRNA-cmnm(5)s(2)U34. In Rhizorhabdus wittichii (strain DSM 6014 / CCUG 31198 / JCM 15750 / NBRC 105917 / EY 4224 / RW1) (Sphingomonas wittichii), this protein is tRNA modification GTPase MnmE.